Reading from the N-terminus, the 303-residue chain is Tumor necrosis factor receptor type 1-associated DEATH domain protein (303 aa).

A Nuclear export signal motif is present at residues 141–157; the sequence is QKDDELAEIDERLKSIK. Positions 208–298 constitute a Death domain; sequence TSAHIQHFAK…SIALDLLSLN (91 aa). The Nuclear localization signal signature appears at 224–237; it reads KPVGRSLGKTCRAL.

As to quaternary structure, heterodimer with tnfrsf1a.

Its subcellular location is the nucleus. It is found in the cytoplasm. It localises to the cytoskeleton. Functionally, adapter molecule for tnfrsf1a that specifically associates with the cytoplasmic domain of activated tnfrsf1a mediating its interaction with fadd. The polypeptide is Tumor necrosis factor receptor type 1-associated DEATH domain protein (Xenopus laevis (African clawed frog)).